A 304-amino-acid polypeptide reads, in one-letter code: MTTLRIATRKSPLALWQSEHVATALRQHHPGLEVVLVPMSTRGDEVLDRSLAAIGGKGLFLKELELAMLRGEADCAVHSLKDVPMELDAPFVLPAILERGDPADALVSNLYATLQALPLGARVGTSSLRRQAQLRAARPDLELIDLRGNVNTRLAKLDNGGYDAIVLACAGLQRLGLEARITARLDAPEWLPAPAQGAVAVECRGDDARIHDLLAVLDAGRTRACVEAERAMNRALHGSCHVPVAAFARWEGEDLFLQGMVGSASDGRLIHAEAHGSPDATEDLGRLVADGLFEKGAAQLLAEL.

Position 240 is an S-(dipyrrolylmethanemethyl)cysteine (Cys240).

Belongs to the HMBS family. In terms of assembly, monomer. The cofactor is dipyrromethane.

It carries out the reaction 4 porphobilinogen + H2O = hydroxymethylbilane + 4 NH4(+). The protein operates within porphyrin-containing compound metabolism; protoporphyrin-IX biosynthesis; coproporphyrinogen-III from 5-aminolevulinate: step 2/4. Its function is as follows. Tetrapolymerization of the monopyrrole PBG into the hydroxymethylbilane pre-uroporphyrinogen in several discrete steps. This Xanthomonas campestris pv. campestris (strain ATCC 33913 / DSM 3586 / NCPPB 528 / LMG 568 / P 25) protein is Porphobilinogen deaminase.